Consider the following 447-residue polypeptide: Probable rhamnogalacturonase C (447 aa).

An N-terminal signal peptide occupies residues 1-19; it reads MQVKLFYTLALWAPILVSA. N-linked (GlcNAc...) asparagine glycosylation is found at Asn37 and Asn65. Cys40 and Cys66 are disulfide-bonded. Asp217 serves as the catalytic Proton donor. Residues Cys219 and Cys236 are joined by a disulfide bond. 2 N-linked (GlcNAc...) asparagine glycosylation sites follow: Asn237 and Asn252. Residue His291 is part of the active site. A glycan (N-linked (GlcNAc...) asparagine) is linked at Asn316. Cystine bridges form between Cys338–Cys344 and Cys366–Cys375.

It belongs to the glycosyl hydrolase 28 family.

The protein resides in the secreted. Its function is as follows. Pectinolytic enzymes consist of four classes of enzymes: pectine lyase, polygalacturonase, pectin methylesterase and rhamnogalacturonase. Hydrolyzes alpha-D-galacturonopyranosyl-(1,2)-alpha-L-rhamnopyranosyl linkages in the backbone of the hairy regions of pectins. This Aspergillus flavus (strain ATCC 200026 / FGSC A1120 / IAM 13836 / NRRL 3357 / JCM 12722 / SRRC 167) protein is Probable rhamnogalacturonase C (rhgC).